The chain runs to 467 residues: Chromosomal replication initiator protein DnaA (467 aa).

Positions 1-90 are domain I, interacts with DnaA modulators; it reads MSLSLWQQCL…KPVTQTPQAA (90 aa). The tract at residues 91 to 130 is domain II; sequence VTSNVAAPAQVAQTQPQRAAPSTRSGWDNVPAPAEPTYRS. The span at 98–111 shows a compositional bias: low complexity; sequence PAQVAQTQPQRAAP. Residues 98 to 119 are disordered; sequence PAQVAQTQPQRAAPSTRSGWDN. Residues 131–347 form a domain III, AAA+ region region; the sequence is NVNVKHTFDN…GALNRVIANA (217 aa). Residues G175, G177, K178, and T179 each contribute to the ATP site. The segment at 348-467 is domain IV, binds dsDNA; it reads NFTGRAITID…FSNLIRTLSS (120 aa).

This sequence belongs to the DnaA family. As to quaternary structure, oligomerizes as a right-handed, spiral filament on DNA at oriC.

The protein localises to the cytoplasm. Its function is as follows. Plays an essential role in the initiation and regulation of chromosomal replication. ATP-DnaA binds to the origin of replication (oriC) to initiate formation of the DNA replication initiation complex once per cell cycle. Binds the DnaA box (a 9 base pair repeat at the origin) and separates the double-stranded (ds)DNA. Forms a right-handed helical filament on oriC DNA; dsDNA binds to the exterior of the filament while single-stranded (ss)DNA is stabiized in the filament's interior. The ATP-DnaA-oriC complex binds and stabilizes one strand of the AT-rich DNA unwinding element (DUE), permitting loading of DNA polymerase. After initiation quickly degrades to an ADP-DnaA complex that is not apt for DNA replication. Binds acidic phospholipids. This is Chromosomal replication initiator protein DnaA from Shigella sonnei (strain Ss046).